The primary structure comprises 293 residues: Shikimate dehydrogenase (NADP(+)) (293 aa).

Shikimate-binding positions include 20-22 (SLT) and threonine 72. Catalysis depends on lysine 76, which acts as the Proton acceptor. Positions 97 and 112 each coordinate shikimate. NADP(+)-binding positions include 136–140 (GAGGA) and isoleucine 230. Residue tyrosine 232 participates in shikimate binding. Glycine 253 is an NADP(+) binding site.

This sequence belongs to the shikimate dehydrogenase family. Homodimer.

The enzyme catalyses shikimate + NADP(+) = 3-dehydroshikimate + NADPH + H(+). It functions in the pathway metabolic intermediate biosynthesis; chorismate biosynthesis; chorismate from D-erythrose 4-phosphate and phosphoenolpyruvate: step 4/7. Its function is as follows. Involved in the biosynthesis of the chorismate, which leads to the biosynthesis of aromatic amino acids. Catalyzes the reversible NADPH linked reduction of 3-dehydroshikimate (DHSA) to yield shikimate (SA). This Pseudarthrobacter chlorophenolicus (strain ATCC 700700 / DSM 12829 / CIP 107037 / JCM 12360 / KCTC 9906 / NCIMB 13794 / A6) (Arthrobacter chlorophenolicus) protein is Shikimate dehydrogenase (NADP(+)).